A 291-amino-acid chain; its full sequence is Homoserine kinase (291 aa).

80-90 serves as a coordination point for ATP; the sequence is RPASGLGSSAA.

This sequence belongs to the GHMP kinase family. Homoserine kinase subfamily.

The protein localises to the cytoplasm. It carries out the reaction L-homoserine + ATP = O-phospho-L-homoserine + ADP + H(+). It functions in the pathway amino-acid biosynthesis; L-threonine biosynthesis; L-threonine from L-aspartate: step 4/5. Catalyzes the ATP-dependent phosphorylation of L-homoserine to L-homoserine phosphate. The chain is Homoserine kinase from Haloarcula marismortui (strain ATCC 43049 / DSM 3752 / JCM 8966 / VKM B-1809) (Halobacterium marismortui).